We begin with the raw amino-acid sequence, 154 residues long: Cyanate hydratase (154 aa).

Active-site residues include R100, E103, and S126.

Belongs to the cyanase family.

The enzyme catalyses cyanate + hydrogencarbonate + 3 H(+) = NH4(+) + 2 CO2. Catalyzes the reaction of cyanate with bicarbonate to produce ammonia and carbon dioxide. The chain is Cyanate hydratase from Aspergillus fumigatus (strain CBS 144.89 / FGSC A1163 / CEA10) (Neosartorya fumigata).